The sequence spans 419 residues: DNA primase DnaG (419 aa).

Residues 174–260 (DAIIVVEGRS…EVEDLEKDEV (87 aa)) enclose the Toprim domain. Residues glutamate 180, aspartate 222, and aspartate 224 each contribute to the Mg(2+) site. Residues 277-314 (HNILSESDSKNSHKKHNGKHNNKHSNNKHQQHETKVKE) form a disordered region. Positions 288–305 (SHKKHNGKHNNKHSNNKH) are enriched in basic residues.

Belongs to the archaeal DnaG primase family. As to quaternary structure, forms a ternary complex with MCM helicase and DNA. Component of the archaeal exosome complex. Mg(2+) serves as cofactor.

It catalyses the reaction ssDNA + n NTP = ssDNA/pppN(pN)n-1 hybrid + (n-1) diphosphate.. RNA polymerase that catalyzes the synthesis of short RNA molecules used as primers for DNA polymerase during DNA replication. Also part of the exosome, which is a complex involved in RNA degradation. Acts as a poly(A)-binding protein that enhances the interaction between heteromeric, adenine-rich transcripts and the exosome. The sequence is that of DNA primase DnaG from Methanobrevibacter smithii (strain ATCC 35061 / DSM 861 / OCM 144 / PS).